A 199-amino-acid chain; its full sequence is Thymidine kinase (199 aa).

Residues 15 to 22 (GSMFSGKS) and 88 to 91 (DEVQ) contribute to the ATP site. The active-site Proton acceptor is glutamate 89. Cysteine 145, cysteine 148, cysteine 183, and histidine 186 together coordinate Zn(2+).

Belongs to the thymidine kinase family. Homotetramer.

Its subcellular location is the cytoplasm. The enzyme catalyses thymidine + ATP = dTMP + ADP + H(+). This Staphylococcus saprophyticus subsp. saprophyticus (strain ATCC 15305 / DSM 20229 / NCIMB 8711 / NCTC 7292 / S-41) protein is Thymidine kinase.